The primary structure comprises 647 residues: MADVYPVDPAFAADARVTREQYAALYRESIEHPEQFWGKAAQRLEWFKQPTQVKDVSYALDDFHIRWFGDGELNASVNCLDRQLATRGDKTALLFEPDSPDAASYPVTYRQLYERVCKLGNALRNLGVKKGDRVTIYLPMIVDAAVAMLACARIGAVHSVVFGGFAANSIADRVIDCQSKLIITADEGLRGGKKIPLKANVDAALKIPGTNTIETVLVVRHTGGAVEMQAPRDRWFHDVVDGQPAECEPERMNAEDPLFILYTSGSTGKPKGVLHTTAGYLLFASYTHEVVFDLREDDIYWCTADVGWVTGHSYIVYGPLANGATAVMFEGVPNYPNVSRFWEVIDKHQVTIFYTAPTAIRALMRDGAEPVKKTSRKSLRLLGSVGEPINPEAWRWYYDVVGDSRCPIVDTWWQTETGGILISPLAGAVDLKPGSATLPFFGVQPALVDAEGKILEGATEGNLVLLDSWPGQMRSVYGDHQRFIDTYFRTYPGSYFTGDGCRRDADGYYWITGRVDDVINVSGHRIGTAEVESALVSHPKVAEAAVVGFPHDVKGQGIYAYVTLIAGETPSDELHKELVSWVRKEIGPIASPDHLQWAPGLPKTRSGKIMRRILRKIAENAPDQLGDTSTLADPSVVDSLVNERLTR.

CoA-binding positions include 190–193 (RGGK), Thr-310, and Asn-334. Residues 386-388 (GEP), 410-415 (DTWWQT), Asp-499, and Arg-514 contribute to the ATP site. Ser-522 contributes to the CoA binding site. Residue Arg-525 coordinates ATP. Mg(2+) is bound by residues Val-536, His-538, and Val-541. Arg-583 is a CoA binding site. Lys-608 bears the N6-acetyllysine mark.

Belongs to the ATP-dependent AMP-binding enzyme family. Mg(2+) serves as cofactor. Post-translationally, acetylated. Deacetylation by the SIR2-homolog deacetylase activates the enzyme.

The enzyme catalyses acetate + ATP + CoA = acetyl-CoA + AMP + diphosphate. Functionally, catalyzes the conversion of acetate into acetyl-CoA (AcCoA), an essential intermediate at the junction of anabolic and catabolic pathways. AcsA undergoes a two-step reaction. In the first half reaction, AcsA combines acetate with ATP to form acetyl-adenylate (AcAMP) intermediate. In the second half reaction, it can then transfer the acetyl group from AcAMP to the sulfhydryl group of CoA, forming the product AcCoA. In Xanthomonas oryzae pv. oryzae (strain MAFF 311018), this protein is Acetyl-coenzyme A synthetase.